Reading from the N-terminus, the 328-residue chain is Malate dehydrogenase (328 aa).

Residue Gly-12 to Gly-18 coordinates NAD(+). The substrate site is built by Arg-93 and Arg-99. NAD(+) contacts are provided by residues Asn-106, Gln-113, and Val-130–Asn-132. Substrate is bound by residues Asn-132 and Arg-166. His-191 serves as the catalytic Proton acceptor.

Belongs to the LDH/MDH superfamily. MDH type 2 family.

The enzyme catalyses (S)-malate + NAD(+) = oxaloacetate + NADH + H(+). Its function is as follows. Catalyzes the reversible oxidation of malate to oxaloacetate. This chain is Malate dehydrogenase, found in Dechloromonas aromatica (strain RCB).